Here is a 104-residue protein sequence, read N- to C-terminus: U-scoloptoxin(10)-Cw1a (104 aa).

A signal peptide spans 1–23 (MNKTVAVFFAVICVICVIKSCKT).

It belongs to the scoloptoxin-10 family. Contains 3 disulfide bonds. As to expression, expressed by the venom gland.

It is found in the secreted. In Cormocephalus westwoodi (Westwood's green centipede), this protein is U-scoloptoxin(10)-Cw1a.